The following is a 123-amino-acid chain: Small ribosomal subunit protein uS12 (123 aa).

Asp-89 is subject to 3-methylthioaspartic acid.

Belongs to the universal ribosomal protein uS12 family. As to quaternary structure, part of the 30S ribosomal subunit. Contacts proteins S8 and S17. May interact with IF1 in the 30S initiation complex.

With S4 and S5 plays an important role in translational accuracy. Its function is as follows. Interacts with and stabilizes bases of the 16S rRNA that are involved in tRNA selection in the A site and with the mRNA backbone. Located at the interface of the 30S and 50S subunits, it traverses the body of the 30S subunit contacting proteins on the other side and probably holding the rRNA structure together. The combined cluster of proteins S8, S12 and S17 appears to hold together the shoulder and platform of the 30S subunit. In Bradyrhizobium diazoefficiens (strain JCM 10833 / BCRC 13528 / IAM 13628 / NBRC 14792 / USDA 110), this protein is Small ribosomal subunit protein uS12.